The primary structure comprises 783 residues: FYN-binding protein 1 (783 aa).

Composition is skewed to polar residues over residues M1 to S18 and G25 to A45. The disordered stretch occupies residues M1 to K502. Residue K3 is modified to N6-acetyllysine. S28 and S46 each carry phosphoserine. Basic and acidic residues predominate over residues S69–K79. S225 carries the post-translational modification Phosphoserine. Basic and acidic residues-rich tracts occupy residues P240–G252 and N278–A290. S329 bears the Phosphoserine mark. Over residues K345–P363 the composition is skewed to pro residues. An interaction with SKAP1 region spans residues P348–A448. A compositionally biased stretch (polar residues) spans T374–Y387. Positions L392–I424 are enriched in pro residues. A compositionally biased stretch (acidic residues) spans L451–I465. The stretch at D456–T507 forms a coiled coil. Position 457 is a phosphoserine (S457). The SH2-binding motif lies at Y462–I465. Over residues E466–K501 the composition is skewed to basic and acidic residues. Positions K469–K505 match the Nuclear localization signal motif. An SH3 1 domain is found at Q511–D572. Y571 is subject to Phosphotyrosine. S573 and S580 each carry phosphoserine. Residues Y595 to V598 carry the SH2-binding; to LCP2 motif. A disordered region spans residues V598 to E678. Acidic residues-rich tracts occupy residues P620–D635 and M646–T656. The SH2-binding; to FYN signature appears at Y625–I628. Y651 carries the phosphotyrosine modification. The Nuclear localization signal signature appears at K674–K700. The region spanning K700–G768 is the SH3 2 domain.

In terms of assembly, part of a complex consisting of SKAP2, FYB1 and PTPNS1. Part of a complex consisting of SKAP2, FYB1 and LILRB3. Part of a complex consisting of SKAP1, FYB1 and CLNK. Interacts with CLNK (via its SH2 domain); this interaction allows SKAP1 and FYB1 to recruit FYN to the complex, thus promoting the phosphorylation of CLNK by FYN. Interacts with FYN. Interacts with LCP2. Interacts with SKAP1. Interacts with SKAP2. Interacts with FASLG. Interacts with EVL. Interacts with TMEM47. Interacts with LCK. In terms of processing, T-cell receptor ligation leads to increased tyrosine phosphorylation. As to expression, expressed in hematopoietic tissues such as myeloid and T-cells, spleen and thymus. Not expressed in B-cells, nor in non-lymphoid tissues.

The protein resides in the cytoplasm. It is found in the nucleus. It localises to the cell junction. Its function is as follows. Acts as an adapter protein of the FYN and LCP2 signaling cascades in T-cells. May play a role in linking T-cell signaling to remodeling of the actin cytoskeleton. Modulates the expression of IL2. Involved in platelet activation. Prevents the degradation of SKAP1 and SKAP2. May be involved in high affinity immunoglobulin epsilon receptor signaling in mast cells. This Homo sapiens (Human) protein is FYN-binding protein 1.